The sequence spans 263 residues: Purine nucleoside phosphorylase SE_0862 (263 aa).

Positions 79, 124, and 141 each coordinate Zn(2+).

It belongs to the purine nucleoside phosphorylase YfiH/LACC1 family. Homodimer. It depends on Cu(2+) as a cofactor. Zn(2+) is required as a cofactor.

It catalyses the reaction adenosine + phosphate = alpha-D-ribose 1-phosphate + adenine. The enzyme catalyses S-methyl-5'-thioadenosine + phosphate = 5-(methylsulfanyl)-alpha-D-ribose 1-phosphate + adenine. The catalysed reaction is inosine + phosphate = alpha-D-ribose 1-phosphate + hypoxanthine. It carries out the reaction adenosine + H2O + H(+) = inosine + NH4(+). Its function is as follows. Purine nucleoside enzyme that catalyzes the phosphorolysis of adenosine and inosine nucleosides, yielding D-ribose 1-phosphate and the respective free bases, adenine and hypoxanthine. Also catalyzes the phosphorolysis of S-methyl-5'-thioadenosine into adenine and S-methyl-5-thio-alpha-D-ribose 1-phosphate. Also has adenosine deaminase activity. The chain is Purine nucleoside phosphorylase SE_0862 from Staphylococcus epidermidis (strain ATCC 12228 / FDA PCI 1200).